A 945-amino-acid polypeptide reads, in one-letter code: MKTDELREKYLAFFETKGCVRQPSDVLVPAWDPSVLFTPAGMNQFKDHFLGKVKLDFTRATTCQKCLRTGDIDNVGRTAFHHTFFEMLGNFSFGDYFKEEAIHWAWEFLTDKKWLGIPGERLTVTVYKDDDEAFGIWHDKIGLPTQRISRMDEDENFWPASAPSEGPDGVCGPCSEIYYQLEDGSDVEIWNLVFTQFNRVGTPPDNLHPLPSKNIDTGMGLERTASVLQGVPTNFHIDSLFPIVEAASEVCGVKYEYESDNGRRLRRITDHARASVFAVHENVYPGPKDARSVIRRLIRRAVLDGYQMNLREPFLYKLVEAVADASKAAYPELGQTTQRVSEAIESEEKAFFSTIDGGMKRIHRLFEEMNDEASVMVPGAEAADLLTTYGVPPELVQTLAAEQNFTFDWSGFREAMDKHADESDGGQRVLFQTGPLETLKEALRETPFVGYEQTEATAVVKGIITGDGKGKGDDGQLLSHLDRPEDAVLRLVLDHSPFYGESGGQVGDIGVISNDNFEFEVIDTQRHASMIVHHGRLIRGKINEGETCTAKVDVENRTALARAHSATHILHHALHTHVGRHAEQQGSKVEPDRLRFDFTNPKAIDDETLVKIEQDVLGMVGKGDEIRWDTVSLADAREAGAMMLFGEKYPDPCRMVSMGTFSRELCGGTHLTNTKQVGSFEVVVEESVSTGTRRIEALTGERAKEHREQTQALLNEVAGKLNCDASVAAAATVALIEEVRRLKKELSSGKAADYPAEFVFDAKAAKAETTDISDYNAVRAAVRGLTRRLNVAITDVLSRLDSLLADRSKLVEQLKQVTAGGKISADDLIADGTKVGDTLLIVAETPGANPNIMRGWIDQIRKKSDTPTAVLLASSMNDKVMLVGGLSRDLVDRGLKAGDWVGAAAKVVGGSGGGRPDMAQAGGKDASKLPEALQQARETMTEKLG.

Zn(2+)-binding residues include His564, His568, Cys666, and His670. The interval 911–945 (SGGGRPDMAQAGGKDASKLPEALQQARETMTEKLG) is disordered.

The protein belongs to the class-II aminoacyl-tRNA synthetase family. It depends on Zn(2+) as a cofactor.

Its subcellular location is the cytoplasm. The catalysed reaction is tRNA(Ala) + L-alanine + ATP = L-alanyl-tRNA(Ala) + AMP + diphosphate. In terms of biological role, catalyzes the attachment of alanine to tRNA(Ala) in a two-step reaction: alanine is first activated by ATP to form Ala-AMP and then transferred to the acceptor end of tRNA(Ala). Also edits incorrectly charged Ser-tRNA(Ala) and Gly-tRNA(Ala) via its editing domain. The chain is Alanine--tRNA ligase from Rhodopirellula baltica (strain DSM 10527 / NCIMB 13988 / SH1).